The following is a 626-amino-acid chain: Chaperone protein HtpG (626 aa).

An a; substrate-binding region spans residues 1-331 (MSETVERHEF…TDDLPLNVSR (331 aa)). The segment at 332–544 (EMLQSTPTLQ…GMGPDLQMQR (213 aa)) is b. The tract at residues 545–626 (LLRRAGRGFG…GTAAKPAESA (82 aa)) is c.

The protein belongs to the heat shock protein 90 family. In terms of assembly, homodimer.

The protein localises to the cytoplasm. Molecular chaperone. Has ATPase activity. This is Chaperone protein HtpG from Methylorubrum extorquens (strain PA1) (Methylobacterium extorquens).